The chain runs to 211 residues: uncharacterized protein (211 aa).

2 stretches are compositionally biased toward low complexity: residues Met-1–Asp-19 and Ser-61–Ala-74. Disordered stretches follow at residues Met-1–Ser-27 and Ala-54–Arg-94.

Interacts with RLK902. In terms of tissue distribution, expressed in inflorescences, stems, rosette leaves and weakly in roots.

This is an uncharacterized protein from Arabidopsis thaliana (Mouse-ear cress).